We begin with the raw amino-acid sequence, 1487 residues long: Vacuolar protein sorting/targeting protein 10 (1487 aa).

The first 22 residues, 1–22 (MITRWLLITSFLALAILSLSSA), serve as a signal peptide directing secretion. The Lumenal segment spans residues 23-1356 (AKKSEPEITP…EKKHGISGTG (1334 aa)). Residues 61–71 (FRSFDGGKGWE) form a BNR 1 repeat. N-linked (GlcNAc...) asparagine glycosylation is found at asparagine 300 and asparagine 324. 5 BNR repeats span residues 378 to 387 (ISFDDGRTFQ), 438 to 448 (YVSDDAGVTWR), 479 to 489 (QFSIDHGKEWH), 721 to 731 (WVSHDHGKNWE), and 816 to 826 (YFSKNRGENWD). N-linked (GlcNAc...) asparagine glycosylation is present at asparagine 967. BNR repeat units lie at residues 1104–1114 (FMTRDGGITWK) and 1145–1155 (YYSLDEGDNWE). Asparagine 1265 carries an N-linked (GlcNAc...) asparagine glycan. Residues 1357-1377 (LFFAIMIPIVAAAGVGYYVYA) form a helical membrane-spanning segment. Residues 1378–1404 (KWDGKFGQIRLGENAGTYEGLLSRESP) are Cytoplasmic-facing. Residues 1405–1425 (IVTVPIAVIAGIVAVIRALPL) form a helical membrane-spanning segment. The Lumenal segment spans residues 1426–1487 (LAMSLWRSAS…DAEIDEDDEL (62 aa)).

This sequence belongs to the VPS10-related sortilin family.

Its subcellular location is the golgi apparatus. The protein localises to the trans-Golgi network membrane. It is found in the prevacuolar compartment membrane. Functions as a sorting receptor in the Golgi compartment required for the intracellular sorting and delivery of soluble vacuolar proteins, like carboxypeptidase Y (CPY) and proteinase A. Executes multiple rounds of sorting by cycling between the late Golgi and a prevacuolar endosome-like compartment. In Neosartorya fischeri (strain ATCC 1020 / DSM 3700 / CBS 544.65 / FGSC A1164 / JCM 1740 / NRRL 181 / WB 181) (Aspergillus fischerianus), this protein is Vacuolar protein sorting/targeting protein 10 (vps10).